A 625-amino-acid chain; its full sequence is Chaperone protein HtpG (625 aa).

Residues 1–337 (MNIQKKEVYS…SNNLPLNVSR (337 aa)) are a; substrate-binding. The tract at residues 338–552 (EILQDNSITQ…SNEMSTQMAK (215 aa)) is b. Positions 553–625 (LFSAAGQSVP…ARTNKLILEQ (73 aa)) are c.

Belongs to the heat shock protein 90 family. In terms of assembly, homodimer.

The protein resides in the cytoplasm. In terms of biological role, molecular chaperone. Has ATPase activity. The sequence is that of Chaperone protein HtpG from Buchnera aphidicola subsp. Schizaphis graminum (strain Sg).